A 267-amino-acid chain; its full sequence is 2-dehydro-3-deoxyphosphooctonate aldolase (267 aa).

Belongs to the KdsA family.

The protein localises to the cytoplasm. The enzyme catalyses D-arabinose 5-phosphate + phosphoenolpyruvate + H2O = 3-deoxy-alpha-D-manno-2-octulosonate-8-phosphate + phosphate. It participates in carbohydrate biosynthesis; 3-deoxy-D-manno-octulosonate biosynthesis; 3-deoxy-D-manno-octulosonate from D-ribulose 5-phosphate: step 2/3. The protein operates within bacterial outer membrane biogenesis; lipopolysaccharide biosynthesis. This chain is 2-dehydro-3-deoxyphosphooctonate aldolase, found in Campylobacter jejuni subsp. doylei (strain ATCC BAA-1458 / RM4099 / 269.97).